We begin with the raw amino-acid sequence, 724 residues long: Solute carrier organic anion transporter family member 4C1 (724 aa).

At 1-105 (MKSAKGIENL…QCLQRCNTPG (105 aa)) the chain is on the cytoplasmic side. Residues serine 15, serine 16, serine 24, serine 26, and serine 28 each carry the phosphoserine modification. The disordered stretch occupies residues 30–71 (IEVSALSSDPQRENSQPQELQKPQEPQKSPEPSLPSAPPNVS). Positions 44-60 (SQPQELQKPQEPQKSPE) are enriched in low complexity. Residues 106–126 (GFLLHYCLLAVTQGIVVNGLV) traverse the membrane as a helical segment. The Extracellular portion of the chain corresponds to 127–145 (NISISTVEKRYEMKSSLTG). The helical transmembrane segment at 146–166 (LISSSYDISFCLLSLFVSFFG) threads the bilayer. The Cytoplasmic segment spans residues 167–172 (ERGHKP). The helical transmembrane segment at 173–197 (RWLAFAAFMIGLGALVFSLPQFFSG) threads the bilayer. Topologically, residues 198–223 (EYKLGSLFEDTCVTTRNSTSCTSSTS) are extracellular. A helical membrane pass occupies residues 224–254 (SLSNYLYVFILGQLLLGAGGTPLYTLGTAFL). Over 255 to 274 (DDSVPTHKSSLYIGTGYAMS) the chain is Cytoplasmic. A helical membrane pass occupies residues 275–295 (ILGPAIGYVLGGQLLTIYIDV). Residues 296-311 (AMGESTDVTEDDPRWL) are Extracellular-facing. Residues 312-336 (GAWWIGFLLSWIFAWSLIIPFSCFP) traverse the membrane as a helical segment. Residues 337 to 377 (KHLPGTAEIQAGKTSQAHQSNSNADVKFGKSIKDFPAALKN) lie on the Cytoplasmic side of the membrane. The helical transmembrane segment at 378–399 (LMKNAVFMCLVLSTSSEALITT) threads the bilayer. The Extracellular segment spans residues 400-419 (GFATFLPKFIENQFGLTSSF). The helical transmembrane segment at 420–443 (AATLGGAVLIPGAALGQILGGFLV) threads the bilayer. Topologically, residues 444–447 (SKFR) are cytoplasmic. The helical transmembrane segment at 448 to 471 (MTCKNTMKFALFTSGVALTLSFVF) threads the bilayer. At 472 to 580 (MYAKCENEPF…ETHCAKLPIF (109 aa)) the chain is on the extracellular side. A Kazal-like domain is found at 495–549 (GNLIAPCNANCNCSRSYYYPVCGDGVQYFSPCFAGCSNPVAHRKPKVYYNCSCIE). Cystine bridges form between cysteine 501/cysteine 530, cysteine 507/cysteine 526, and cysteine 516/cysteine 547. The helical transmembrane segment at 581–603 (LCIFFIVIIFTFMAGTPITVSIL) threads the bilayer. The Cytoplasmic portion of the chain corresponds to 604–612 (RCVNHRQRS). Residues 613 to 638 (LALGIQFMVLRLLGTIPGPIIFGFTI) form a helical membrane-spanning segment. Residues 639–672 (DSTCILWDINDCGIKGACWIYDNIKMAHMLVAIS) lie on the Extracellular side of the membrane. Residues 673-690 (VTCKVITMFFNGFAIFLY) form a helical membrane-spanning segment. The Cytoplasmic portion of the chain corresponds to 691–724 (KPPPSATDVSFHKENAVVTNVLAEQDLNKIVKEG).

Belongs to the organo anion transporter (TC 2.A.60) family. Predominantly expressed in kidney but also weakly expressed in both fetal liver and kidney.

It is found in the basolateral cell membrane. The catalysed reaction is estrone 3-sulfate(out) = estrone 3-sulfate(in). It catalyses the reaction L-thyroxine(out) = L-thyroxine(in). The enzyme catalyses 3,3',5-triiodo-L-thyronine(out) = 3,3',5-triiodo-L-thyronine(in). It carries out the reaction chenodeoxycholate(out) = chenodeoxycholate(in). The catalysed reaction is glycocholate(out) = glycocholate(in). It catalyses the reaction L-homoarginine(in) = L-homoarginine(out). The enzyme catalyses L-arginine(in) = L-arginine(out). It carries out the reaction N(omega),N(omega)-dimethyl-L-arginine(out) = N(omega),N(omega)-dimethyl-L-arginine(in). Mediates the transport of organic anions such as steroids (estrone 3-sulfate, chenodeoxycholate, glycocholate) and thyroid hormones (3,3',5-triiodo-L-thyronine (T3), L-thyroxine (T4)), in the kidney. Capable of transporting cAMP and pharmacological substances such as digoxin, ouabain and methotrexate. Transport is independent of sodium, chloride ion, and ATP. Transport activity is stimulated by an acidic extracellular environment due to increased substrate affinity to the transporter. The driving force for this transport activity is currently not known. The role of hydrogencarbonate (HCO3(-), bicarbonate) as the probable counteranion that exchanges for organic anions is still not well defined. Functions as an uptake transporter at the apical membrane, suggesting a role in renal reabsorption. Involved in the renal secretion of the uremic toxin ADMA (N(omega),N(omega)-dimethyl-L-arginine or asymmetrical dimethylarginine), which is associated to cardiovascular events and mortality, and the structurally related amino acids L-arginine and L-homoarginine (a cardioprotective biomarker). Can act bidirectionally, suggesting a dual protective role of this transport protein; exporting L-homoarginine after being synthesized in proximal tubule cells, and mediating uptake of ADMA from the blood into proximal tubule cells where it is degraded by the enzyme dimethylarginine dimethylaminohydrolase 1 (DDAH1). May be involved in sperm maturation by enabling directed movement of organic anions and compounds within or between cells. This ion-transporting process is important to maintain the strict epididymal homeostasis necessary for sperm maturation. May have a role in secretory functions since seminal vesicle epithelial cells are assumed to secrete proteins involved in decapacitation by modifying surface proteins to facilitate the acquisition of the ability to fertilize the egg. The protein is Solute carrier organic anion transporter family member 4C1 of Homo sapiens (Human).